Consider the following 145-residue polypeptide: 3-dehydroquinate dehydratase (145 aa).

Residue Tyr-24 is the Proton acceptor of the active site. Substrate-binding residues include Asn-76, His-82, and Asp-89. His-102 serves as the catalytic Proton donor. Residues Val-103–Ser-104 and Arg-113 contribute to the substrate site.

The protein belongs to the type-II 3-dehydroquinase family. Homododecamer.

It carries out the reaction 3-dehydroquinate = 3-dehydroshikimate + H2O. Its pathway is metabolic intermediate biosynthesis; chorismate biosynthesis; chorismate from D-erythrose 4-phosphate and phosphoenolpyruvate: step 3/7. Its function is as follows. Catalyzes a trans-dehydration via an enolate intermediate. The sequence is that of 3-dehydroquinate dehydratase from Herminiimonas arsenicoxydans.